We begin with the raw amino-acid sequence, 353 residues long: Serine/threonine-protein phosphatase 2A activator 1 (353 aa).

A disordered region spans residues 331–353 (ANNATTKMPPPLSTSTSRFIHRR). A compositionally biased stretch (polar residues) spans 343–353 (STSTSRFIHRR).

Belongs to the PTPA-type PPIase family.

It is found in the cytoplasm. The protein localises to the nucleus. It carries out the reaction [protein]-peptidylproline (omega=180) = [protein]-peptidylproline (omega=0). In terms of biological role, PPIases accelerate the folding of proteins. It catalyzes the cis-trans isomerization of proline imidic peptide bonds in oligopeptides. Acts as a regulatory subunit for PP2A-like phosphatases modulating their activity or substrate specificity, probably by inducing a conformational change in the catalytic subunit, a direct target of the PPIase. Can reactivate inactive phosphatase PP2A-phosphatase methylesterase complexes (PP2Ai) in presence of ATP and Mg(2+) by dissociating the inactive form from the complex. This chain is Serine/threonine-protein phosphatase 2A activator 1 (RRD1), found in Kluyveromyces lactis (strain ATCC 8585 / CBS 2359 / DSM 70799 / NBRC 1267 / NRRL Y-1140 / WM37) (Yeast).